The sequence spans 272 residues: uncharacterized protein (272 aa).

This is an uncharacterized protein from Saccharomyces cerevisiae (strain ATCC 204508 / S288c) (Baker's yeast).